We begin with the raw amino-acid sequence, 150 residues long: Developmental pluripotency-associated protein 3 (150 aa).

Positions 1 to 22 are enriched in basic and acidic residues; sequence MEEPSEKVDPMKDPETPQKKDE. The segment at 1-32 is disordered; it reads MEEPSEKVDPMKDPETPQKKDEEDALDDTDVL. A required for H3K9me2-binding region spans residues 1–75; that stretch reads MEEPSEKVDP…VPVENKSEKI (75 aa). The tract at residues 76–150 is required to exclude TET3 from the maternal pronucleus; it reads RREVQSAFPK…PSENAKIGKN (75 aa).

As to expression, expressed in the immature oocytes and in newborn ovaries. Subsequently detected in maturing oocytes and in preimplantation embryos. Expressed in pluripotent embryonic but not in differentiated somatic cells. Expressed in blastocysts, epiblasts, primordial germ cells, embryonic gonads and primitive spermatogonia. No expression is detected in adult testes.

It localises to the nucleus. It is found in the cytoplasm. Its function is as follows. Primordial germ cell (PGCs)-specific protein involved in epigenetic chromatin reprogramming in the zygote following fertilization. In zygotes, DNA demethylation occurs selectively in the paternal pronucleus before the first cell division, while the adjacent maternal pronucleus and certain paternally-imprinted loci are protected from this process. Participates in protection of DNA methylation in the maternal pronucleus by preventing conversion of 5mC to 5hmC: specifically recognizes and binds histone H3 dimethylated at 'Lys-9' (H3K9me2) on maternal genome, and protects maternal genome from TET3-mediated conversion to 5hmC and subsequent DNA demethylation. Does not bind paternal chromatin, which is mainly packed into protamine and does not contain much H3K9me2 mark. Also protects imprinted loci that are marked with H3K9me2 in mature sperm from DNA demethylation in early embryogenesis. May be important for the totipotent/pluripotent states continuing through preimplantation development. Also involved in chromatin condensation in oocytogenesis. The polypeptide is Developmental pluripotency-associated protein 3 (Dppa3) (Mus musculus (Mouse)).